The primary structure comprises 256 residues: MVALRLIPCLDVAHGRVVKGVNFVNLRDSGDPVELACRYSDEGADELVFLDIRASVENRNTLVDLVSRTAKSVKIPFTVGGGIDSVASINDLLRAGADKVSLNSSAVRNPDLVSKSSREFGNQCIVIAIDAKRKINKTDEWEVYVKGGRENTGIDVLSWAKKVEELGAGEILLTSMDGDGTQNGYDLHLTKSVANIVNLPVIASGGAGCLEDIYDVFIEGRASAALLASLLHDRKLSLREIKTFLLDKKLPIRPCE.

Residues D11 and D130 contribute to the active site.

Belongs to the HisA/HisF family. As to quaternary structure, heterodimer of HisH and HisF.

It localises to the cytoplasm. The catalysed reaction is 5-[(5-phospho-1-deoxy-D-ribulos-1-ylimino)methylamino]-1-(5-phospho-beta-D-ribosyl)imidazole-4-carboxamide + L-glutamine = D-erythro-1-(imidazol-4-yl)glycerol 3-phosphate + 5-amino-1-(5-phospho-beta-D-ribosyl)imidazole-4-carboxamide + L-glutamate + H(+). It participates in amino-acid biosynthesis; L-histidine biosynthesis; L-histidine from 5-phospho-alpha-D-ribose 1-diphosphate: step 5/9. Its function is as follows. IGPS catalyzes the conversion of PRFAR and glutamine to IGP, AICAR and glutamate. The HisF subunit catalyzes the cyclization activity that produces IGP and AICAR from PRFAR using the ammonia provided by the HisH subunit. This is Imidazole glycerol phosphate synthase subunit HisF from Prochlorococcus marinus (strain MIT 9301).